Here is a 492-residue protein sequence, read N- to C-terminus: Probable folate-biopterin transporter 5 (492 aa).

12 consecutive transmembrane segments (helical) span residues valine 46 to valine 66, isoleucine 92 to glycine 112, proline 117 to serine 137, tyrosine 142 to isoleucine 162, leucine 186 to valine 206, glycine 210 to serine 230, leucine 264 to threonine 285, valine 298 to leucine 318, leucine 328 to leucine 348, phenylalanine 361 to phenylalanine 381, phenylalanine 396 to glycine 416, and tryptophan 433 to valine 453.

It belongs to the major facilitator superfamily. Folate-biopterin transporter (TC 2.A.71) family.

It is found in the membrane. Its function is as follows. Could mediate folate transport. This is Probable folate-biopterin transporter 5 from Arabidopsis thaliana (Mouse-ear cress).